A 492-amino-acid polypeptide reads, in one-letter code: Histone-lysine N-methyltransferase SUVR4 (492 aa).

A disordered region spans residues 112–138 (ETRSASSGSSIQVVQKQPQLSNGDRKR). Residues 113–133 (TRSASSGSSIQVVQKQPQLSN) are compositionally biased toward polar residues. Residues cysteine 196, cysteine 197, cysteine 200, cysteine 204, cysteine 213, cysteine 281, cysteine 285, cysteine 287, and cysteine 291 each contribute to the Zn(2+) site. Residues 196-299 (CCANCKGNCL…QCGNRVVQRG (104 aa)) enclose the Pre-SET domain. Residues 302-435 (CQLQVYFTQE…AMDELTWDYM (134 aa)) form the SET domain. Residues 313–315 (KGW) and 391–392 (NH) each bind S-adenosyl-L-methionine. Zn(2+) is bound at residue cysteine 394. Tyrosine 434 lines the S-adenosyl-L-methionine pocket. The 17-residue stretch at 446–462 (KAFRCCCGSESCRDRKI) folds into the Post-SET domain. Zn(2+)-binding residues include cysteine 450, cysteine 452, and cysteine 457. The interval 463–492 (KGSQGKSIERRKIVSAKKQQGSKEVSKKRK) is disordered.

It belongs to the class V-like SAM-binding methyltransferase superfamily. Histone-lysine methyltransferase family. Interacts with ubiquitin.

The protein localises to the nucleus. The protein resides in the chromosome. It carries out the reaction N(6)-methyl-L-lysyl(9)-[histone H3] + S-adenosyl-L-methionine = N(6),N(6)-dimethyl-L-lysyl(9)-[histone H3] + S-adenosyl-L-homocysteine + H(+). It catalyses the reaction N(6),N(6)-dimethyl-L-lysyl(9)-[histone H3] + S-adenosyl-L-methionine = N(6),N(6),N(6)-trimethyl-L-lysyl(9)-[histone H3] + S-adenosyl-L-homocysteine + H(+). Its function is as follows. Histone methyltransferase that converts monomethylated 'Lys-9' of histone H3 (H3K9me1) to dimethylated 'Lys-9' (H3K9me2) in the absence of bound ubiquitin, and to trimethylated 'Lys-9' (H3K9me3) in the presence of bound ubiquitin. Acts in a locus-specific manner and contributes to the transcriptional silencing of pseudogenes and transposons. H3 'Lys-9' methylation represents a specific tag for epigenetic transcriptional repression. The sequence is that of Histone-lysine N-methyltransferase SUVR4 (SUVR4) from Arabidopsis thaliana (Mouse-ear cress).